The chain runs to 137 residues: Large ribosomal subunit protein uL16 (137 aa).

Residues 1–17 (MLQPKRTKFRKTHKGRN) show a composition bias toward basic residues. The tract at residues 1-24 (MLQPKRTKFRKTHKGRNRGLANTG) is disordered.

It belongs to the universal ribosomal protein uL16 family. Part of the 50S ribosomal subunit.

In terms of biological role, binds 23S rRNA and is also seen to make contacts with the A and possibly P site tRNAs. This chain is Large ribosomal subunit protein uL16, found in Aeromonas salmonicida (strain A449).